We begin with the raw amino-acid sequence, 282 residues long: Bis(5'-nucleosyl)-tetraphosphatase, symmetrical (282 aa).

This sequence belongs to the Ap4A hydrolase family.

The enzyme catalyses P(1),P(4)-bis(5'-adenosyl) tetraphosphate + H2O = 2 ADP + 2 H(+). Hydrolyzes diadenosine 5',5'''-P1,P4-tetraphosphate to yield ADP. This chain is Bis(5'-nucleosyl)-tetraphosphatase, symmetrical, found in Burkholderia pseudomallei (strain 1106a).